We begin with the raw amino-acid sequence, 483 residues long: uncharacterized protein (483 aa).

The 61-residue stretch at 11–71 folds into the TRAM domain; that stretch reads RYRKGDIIEL…SRYLEARAIE (61 aa). The [4Fe-4S] cluster site is built by Cys-84, Cys-90, Cys-93, and Cys-187. S-adenosyl-L-methionine contacts are provided by Gln-312, Tyr-341, Glu-362, and Asp-412. Cys-439 acts as the Nucleophile in catalysis.

This sequence belongs to the class I-like SAM-binding methyltransferase superfamily. RNA M5U methyltransferase family.

This is an uncharacterized protein from Chlorobaculum tepidum (strain ATCC 49652 / DSM 12025 / NBRC 103806 / TLS) (Chlorobium tepidum).